The following is a 348-amino-acid chain: MPPSLLSLEGATVRFGGRAVLDDVGLGVAEHEVVCVLGPSGSGKSTLLRAVAGLQPLDAGRVTLDGRDQSGVPAHKREVGLMFQDHQLFPQRDVAGNIAFGPRMRGASRAEQQARVAELLQLVGLPGAARRSVAALSGGEQQRVALARALAPRPRLLMLDEPLGQLDRSLRERLVVELRELFGRLGTTVLAVTHDQGEAFALADRVVVMRDGRIAQSGTPLEVWQRPADAFVARFLGFENVAEASVAGQAADTPWGKVPVPEDAPQGTRTVLVRPAGVRVVPADEGLRCTVTARTFRGTHVAVHLQPEGAPRLEAACALRAAPEVGAAVGVEFDAADVVVLGGSGVPE.

An ABC transporter domain is found at 6–236 (LSLEGATVRF…PADAFVARFL (231 aa)). Residue 38 to 45 (GPSGSGKS) participates in ATP binding.

The protein belongs to the ABC transporter superfamily. Fe(3+) ion importer (TC 3.A.1.10) family. As to quaternary structure, the complex is composed of two ATP-binding proteins (FbpC), two transmembrane proteins (FbpB) and a solute-binding protein (FbpA).

The protein resides in the cell membrane. It catalyses the reaction Fe(3+)(out) + ATP + H2O = Fe(3+)(in) + ADP + phosphate + H(+). In terms of biological role, part of the ABC transporter complex FbpABC involved in Fe(3+) ions import. Responsible for energy coupling to the transport system. This chain is Fe(3+) ions import ATP-binding protein FbpC, found in Streptomyces coelicolor (strain ATCC BAA-471 / A3(2) / M145).